A 259-amino-acid polypeptide reads, in one-letter code: Tryptophan synthase alpha chain (259 aa).

Active-site proton acceptor residues include Glu42 and Asp53.

The protein belongs to the TrpA family. In terms of assembly, tetramer of two alpha and two beta chains.

The enzyme catalyses (1S,2R)-1-C-(indol-3-yl)glycerol 3-phosphate + L-serine = D-glyceraldehyde 3-phosphate + L-tryptophan + H2O. It functions in the pathway amino-acid biosynthesis; L-tryptophan biosynthesis; L-tryptophan from chorismate: step 5/5. Its function is as follows. The alpha subunit is responsible for the aldol cleavage of indoleglycerol phosphate to indole and glyceraldehyde 3-phosphate. The protein is Tryptophan synthase alpha chain of Erythrobacter litoralis (strain HTCC2594).